The primary structure comprises 547 residues: Pyochelin synthase PchD (547 aa).

The protein belongs to the ATP-dependent AMP-binding enzyme family.

The enzyme catalyses salicylate + holo-[ACP] + ATP = salicyl-[ACP] + AMP + diphosphate. It participates in siderophore biosynthesis. The protein operates within antifungal biosynthesis. In terms of biological role, involved in the biosynthesis of the siderophore pyochelin. Specifically adenylates salicylate and loads it onto the holo form of PchE via a thioester linkage to the phosphopanthetheine moiety. Is also involved in the synthesis of the antifungal antibiotic dihydroaeruginoic acid (Dha or hydroxyphenyl-thiazolinyl-carboxylate), a precursor of pyochelin. In Pseudomonas aeruginosa (strain UCBPP-PA14), this protein is Pyochelin synthase PchD.